Reading from the N-terminus, the 562-residue chain is Tryptophan 2-monooxygenase (562 aa).

Ser54, Glu74, Arg76, Arg82, and Arg104 together coordinate FMN. Substrate is bound at residue Arg104.

This sequence belongs to the tryptophan 2-monooxygenase family. The cofactor is FMN.

The enzyme catalyses L-tryptophan + O2 = indole-3-acetamide + CO2 + H2O. It functions in the pathway plant hormone metabolism; auxin biosynthesis. The sequence is that of Tryptophan 2-monooxygenase (iaaM) from Pantoea agglomerans pv. gypsophilae (Erwinia herbicola).